We begin with the raw amino-acid sequence, 147 residues long: Cyclic di-AMP receptor B (147 aa).

In terms of domain architecture, CBS spans 18 to 78 (MIEADKVAHV…SIFGLERIEF (61 aa)). 3',3'-c-di-AMP contacts are provided by Lys23, Ala25, Thr46, Ala47, and Arg131.

In terms of assembly, homodimer. Forms a homodimer with a parallel, head-to-head assembly of the monomers. Under conditions of potassium starvation and corresponding low c-di-AMP levels, apo-DarB specifically interacts with the N-terminal region of the RelA. Under the same conditions, apo-DarB also specifically interacts with the C-terminal part of the pyruvate carboxylase.

Its activity is regulated as follows. Binds c-di-AMP. Binding of c-di-AMP to DarB inhibits the interaction with RelA and PYC. Its function is as follows. Involved in the c-di-AMP-dependent regulation of the bacterial stringent response. Modulates the activities of at least two enzymes under conditions of potassium limitation. Apo-DarB regulates the activity of the GTP pyrophosphokinase RelA by interacting directly with RelA, leading to stimulation of (p)ppGpp synthesis and induction of the stringent response. Apo-DarB also regulates pyruvate carboxylase (PYC) at two levels: directly at the protein level by binding to the enzyme and stimulating the synthesis of oxaloacetate and indirectly, by interaction with RelA, which leads to activation of the stringent response and to the increased expression of the pycA gene. Stimulation of these enzymes by DarB is prevented in the presence of cyclic di-AMP (c-di-AMP). This Bacillus subtilis (strain 168) protein is Cyclic di-AMP receptor B.